A 394-amino-acid polypeptide reads, in one-letter code: Protein NDRG1 (394 aa).

Residue Ser-2 is modified to N-acetylserine. Phosphoserine occurs at positions 2, 319, and 326. The disordered stretch occupies residues Arg-325 to Cys-394. Polar residues predominate over residues Arg-327–Gly-339. Phosphothreonine; by SGK1 is present on Thr-328. Phosphoserine; by SGK1 occurs at positions 330 and 332. Ser-333 is modified (phosphoserine). Thr-335 is modified (phosphothreonine). Residue Ser-336 is modified to Phosphoserine. A run of 3 repeats spans residues Gly-339–Glu-348, Gly-349–Glu-358, and Gly-359–Glu-368. The interval Gly-339 to Glu-368 is 3 X 10 AA tandem repeats of G-[PST]-R-S-R-S-H-T-S-E. Thr-340 is subject to Phosphothreonine. The residue at position 342 (Ser-342) is a Phosphoserine. The span at His-345–His-371 shows a compositional bias: basic and acidic residues. Phosphothreonine; by SGK1 is present on Thr-346. The residue at position 352 (Ser-352) is a Phosphoserine. The residue at position 356 (Thr-356) is a Phosphothreonine; by SGK1. Phosphoserine occurs at positions 362 and 364. Phosphothreonine is present on residues Thr-366 and Thr-375.

The protein belongs to the NDRG family. Interacts with RAB4A (membrane-bound form); the interaction involves NDRG1 in vesicular recycling ofCDH1. Interacts with APOA1, APOA2, PRA1 and RTN1. Under stress conditions, phosphorylated in the C-terminal on many serine and threonine residues. Phosphorylated in vitro by PKA. Phosphorylation enhanced by increased intracellular cAMP levels. Homocysteine induces dephosphorylation. Phosphorylation by SGK1 is cell cycle dependent.

It is found in the cytoplasm. Its subcellular location is the cytosol. The protein resides in the cytoskeleton. The protein localises to the microtubule organizing center. It localises to the centrosome. It is found in the nucleus. Its subcellular location is the cell membrane. Functionally, stress-responsive protein involved in hormone responses, cell growth, and differentiation. Acts as a tumor suppressor in many cell types. Necessary but not sufficient for p53/TP53-mediated caspase activation and apoptosis. Has a role in cell trafficking notably of the Schwann cell and is necessary for the maintenance and development of the peripheral nerve myelin sheath. Required for vesicular recycling of CDH1 and TF. May also function in lipid trafficking. Protects cells from spindle disruption damage. Functions in p53/TP53-dependent mitotic spindle checkpoint. Regulates microtubule dynamics and maintains euploidy. This Macaca fascicularis (Crab-eating macaque) protein is Protein NDRG1 (Ndrg1).